The chain runs to 371 residues: Solute carrier family 35 member F6 (371 aa).

Positions 1 to 25 (MAWTKHQLFLAGLMLVTGSINTLSA) are cleaved as a signal peptide. 2 helical membrane-spanning segments follow: residues 48–68 (FLQA…FYLL) and 89–109 (LLFL…YVAL). An EamA domain is found at 104 to 160 (LMYVALNMTSASSFQMLRGAVIIFTGLFSVAFLGRRLVLSQWLGILATIAGLVVVGL). Residue N110 is glycosylated (N-linked (GlcNAc...) asparagine). 7 consecutive transmembrane segments (helical) span residues 117 to 137 (FQML…AFLG), 140 to 160 (LVLS…VVGL), 176 to 196 (VITG…QMVL), 216 to 236 (GLFG…IPAG), 261 to 281 (LIAV…FAGI), 295 to 312 (LDSL…ALGW), and 317 to 336 (ALQI…YNGL). The tract at residues 347–371 (GRPPAEESEQERLLGGSRTPINDAS) is disordered. Phosphothreonine is present on T365.

Belongs to the SLC35F solute transporter family. In terms of assembly, interacts with SLC25A5.

It is found in the mitochondrion. It localises to the lysosome membrane. In terms of biological role, involved in the maintenance of mitochondrial membrane potential in pancreatic ductal adenocarcinoma (PDAC) cells. Promotes pancreatic ductal adenocarcinoma (PDAC) cell growth. May play a role as a nucleotide-sugar transporter. The protein is Solute carrier family 35 member F6 (SLC35F6) of Pongo abelii (Sumatran orangutan).